Here is a 310-residue protein sequence, read N- to C-terminus: Mas-related G-protein coupled receptor member E (310 aa).

Over methionine 1 to threonine 22 the chain is Extracellular. An N-linked (GlcNAc...) asparagine glycan is attached at asparagine 20. The chain crosses the membrane as a helical span at residues isoleucine 23 to tryptophan 43. At leucine 44–aspartate 60 the chain is on the cytoplasmic side. The chain crosses the membrane as a helical span at residues valine 61–leucine 81. Over glutamine 82–histidine 92 the chain is Extracellular. A helical transmembrane segment spans residues isoleucine 93–isoleucine 113. At serine 114–arginine 133 the chain is on the cytoplasmic side. The helical transmembrane segment at tyrosine 134 to leucine 154 threads the bilayer. Over serine 155 to tryptophan 174 the chain is Extracellular. A helical transmembrane segment spans residues leucine 175–leucine 195. At leucine 196–threonine 213 the chain is on the cytoplasmic side. Residues leucine 214 to leucine 234 form a helical membrane-spanning segment. At serine 235–histidine 248 the chain is on the extracellular side. A glycan (N-linked (GlcNAc...) asparagine) is linked at asparagine 237. A helical transmembrane segment spans residues phenylalanine 249–glycine 269. Residues serine 270 to valine 310 lie on the Cytoplasmic side of the membrane.

This sequence belongs to the G-protein coupled receptor 1 family. Mas subfamily.

It is found in the cell membrane. In terms of biological role, orphan receptor. May regulate nociceptor function and/or development, including the sensation or modulation of pain. In Mus musculus (Mouse), this protein is Mas-related G-protein coupled receptor member E (Mrgpre).